The primary structure comprises 262 residues: Malonyl-[acyl-carrier protein] O-methyltransferase (262 aa).

The protein belongs to the methyltransferase superfamily.

It carries out the reaction malonyl-[ACP] + S-adenosyl-L-methionine = malonyl-[ACP] methyl ester + S-adenosyl-L-homocysteine. It functions in the pathway cofactor biosynthesis; biotin biosynthesis. Functionally, converts the free carboxyl group of a malonyl-thioester to its methyl ester by transfer of a methyl group from S-adenosyl-L-methionine (SAM). It allows to synthesize pimeloyl-ACP via the fatty acid synthetic pathway. The chain is Malonyl-[acyl-carrier protein] O-methyltransferase from Dechloromonas aromatica (strain RCB).